A 435-amino-acid chain; its full sequence is tRNA modification GTPase MnmE (435 aa).

3 residues coordinate (6S)-5-formyl-5,6,7,8-tetrahydrofolate: arginine 20, glutamate 77, and lysine 117. The TrmE-type G domain occupies 214 to 359; that stretch reads GLKIVIAGAP…FIKKLESFCH (146 aa). Residues 224–229, 243–249, and 268–271 contribute to the GTP site; these read NSGKSS, TEEAGTT, and DTAG. Positions 228 and 249 each coordinate Mg(2+). A (6S)-5-formyl-5,6,7,8-tetrahydrofolate-binding site is contributed by lysine 435.

The protein belongs to the TRAFAC class TrmE-Era-EngA-EngB-Septin-like GTPase superfamily. TrmE GTPase family. Homodimer. Heterotetramer of two MnmE and two MnmG subunits. K(+) serves as cofactor.

Its subcellular location is the cytoplasm. In terms of biological role, exhibits a very high intrinsic GTPase hydrolysis rate. Involved in the addition of a carboxymethylaminomethyl (cmnm) group at the wobble position (U34) of certain tRNAs, forming tRNA-cmnm(5)s(2)U34. In Bartonella tribocorum (strain CIP 105476 / IBS 506), this protein is tRNA modification GTPase MnmE.